The following is a 289-amino-acid chain: UPF0725 protein At1g27860 (289 aa).

Residues 266–289 form a disordered region; the sequence is DQQRSMTLPSGEQAESSKKRPRLS. Over residues 268–279 the composition is skewed to polar residues; sequence QRSMTLPSGEQA.

This sequence belongs to the UPF0725 (EMB2204) family.

This chain is UPF0725 protein At1g27860, found in Arabidopsis thaliana (Mouse-ear cress).